The sequence spans 1078 residues: Phosphatidylinositol-3,5-bisphosphate 3-phosphatase MTMR4 (1078 aa).

In terms of domain architecture, Myotubularin phosphatase spans 154-571 (DHVKSRFQIE…RALQLWTAVY (418 aa)). The segment at 267-290 (RMPNGNPSNKGNNDGSDNSDTDFD) is disordered. Over residues 270-282 (NGNPSNKGNNDGS) the composition is skewed to low complexity. Residues Asn321, Asn346, and Ile347 each contribute to the a 1,2-diacyl-sn-glycero-3-phospho-(1D-myo-inositol-3,5-bisphosphate) site. Asn321, Asn346, and Ile347 together coordinate a 1,2-diacyl-sn-glycero-3-phospho-(1D-myo-inositol-3-phosphate). Cys408 acts as the Phosphocysteine intermediate in catalysis. A 1,2-diacyl-sn-glycero-3-phospho-(1D-myo-inositol-3,5-bisphosphate) contacts are provided by Ser409, Asp410, Gly411, Trp412, Asp413, Arg414, Lys450, and Arg454. 6 residues coordinate a 1,2-diacyl-sn-glycero-3-phospho-(1D-myo-inositol-3-phosphate): Ser409, Asp410, Gly411, Trp412, Asp413, and Arg414. An a 1,2-diacyl-sn-glycero-3-phospho-(1D-myo-inositol-3-phosphate)-binding site is contributed by Arg454. The span at 629–648 (SSDPNLNNHQGNLESCSSSK) shows a compositional bias: polar residues. Positions 629 to 694 (SSDPNLNNHQ…SGSATNQNNN (66 aa)) are disordered. The stretch at 904–935 (VQQRLRQMEASYKQEVDLLRRQVWELQLQLEI) forms a coiled coil. The disordered stretch occupies residues 960-982 (DGSDMDDLYSDKSEDRLSEASWE). Basic and acidic residues predominate over residues 968-982 (YSDKSEDRLSEASWE). The FYVE-type zinc finger occupies 997-1057 (DHMASHCFNC…VCNTCYDHIQ (61 aa)). Zn(2+) is bound by residues Cys1003, Cys1006, Cys1019, Cys1022, Cys1027, Cys1030, Cys1049, and Cys1052.

Belongs to the protein-tyrosine phosphatase family. Non-receptor class myotubularin subfamily. As to quaternary structure, homooligomeric.

It is found in the early endosome membrane. Its subcellular location is the recycling endosome membrane. It localises to the late endosome membrane. The protein resides in the cytoplasmic vesicle. The protein localises to the phagosome membrane. It carries out the reaction a 1,2-diacyl-sn-glycero-3-phospho-(1D-myo-inositol-3-phosphate) + H2O = a 1,2-diacyl-sn-glycero-3-phospho-(1D-myo-inositol) + phosphate. It catalyses the reaction a 1,2-diacyl-sn-glycero-3-phospho-(1D-myo-inositol-3,5-bisphosphate) + H2O = a 1,2-diacyl-sn-glycero-3-phospho-(1D-myo-inositol-5-phosphate) + phosphate. The enzyme catalyses 1,2-dioctanoyl-sn-glycero-3-phospho-(1-D-myo-inositol-3-phosphate) + H2O = 1,2-dioctanoyl-sn-glycero-3-phospho-(1D-myo-inositol) + phosphate. The catalysed reaction is 1,2-dioctanoyl-sn-glycero-3-phospho-(1D-myo-inositol-3,5-bisphosphate) + H2O = 1,2-dioctanoyl-sn-glycero-3-phospho-(1D-myo-inositol-5-phosphate) + phosphate. Its function is as follows. Lipid phosphatase that specifically dephosphorylates the D-3 position of phosphatidylinositol 3-phosphate and phosphatidylinositol 3,5-bisphosphate, generating phosphatidylinositol and phosphatidylinositol 5-phosphate. Decreases the levels of phosphatidylinositol 3-phosphate, a phospholipid found in cell membranes where it acts as key regulator of both cell signaling and intracellular membrane traffic, in a subset of endosomal membranes to negatively regulate both endocytic recycling and trafficking and/or maturation of endosomes toward lysosomes. Through phosphatidylinositol 3-phosphate turnover in phagosome membranes regulates phagocytosis and phagosome maturation. By decreasing phosphatidylinositol 3-monophosphate (PI3P) levels in immune cells it can also regulate the innate immune response. Beside its lipid phosphatase activity, can also function as a molecular adapter to regulate midbody abscission during mitotic cytokinesis. Can also negatively regulate TGF-beta and BMP signaling through Smad proteins dephosphorylation and retention in endosomes. This Xenopus laevis (African clawed frog) protein is Phosphatidylinositol-3,5-bisphosphate 3-phosphatase MTMR4 (mtmr4).